We begin with the raw amino-acid sequence, 357 residues long: Ribosomal RNA large subunit methyltransferase M (357 aa).

Residues S183, 216–219 (APGG), D235, D255, and D271 contribute to the S-adenosyl-L-methionine site. K300 functions as the Proton acceptor in the catalytic mechanism.

This sequence belongs to the class I-like SAM-binding methyltransferase superfamily. RNA methyltransferase RlmE family. RlmM subfamily. As to quaternary structure, monomer.

It is found in the cytoplasm. The catalysed reaction is cytidine(2498) in 23S rRNA + S-adenosyl-L-methionine = 2'-O-methylcytidine(2498) in 23S rRNA + S-adenosyl-L-homocysteine + H(+). Its function is as follows. Catalyzes the 2'-O-methylation at nucleotide C2498 in 23S rRNA. In Pseudomonas fluorescens (strain ATCC BAA-477 / NRRL B-23932 / Pf-5), this protein is Ribosomal RNA large subunit methyltransferase M.